Reading from the N-terminus, the 312-residue chain is Apolipoprotein E (312 aa).

Positions 1–18 are cleaved as a signal peptide; that stretch reads MKALWALLLVPLLTGCLA. A run of 8 repeats spans residues 72–93, 94–115, 116–137, 138–159, 160–181, 182–203, 204–225, and 226–247. An 8 X 22 AA approximate tandem repeats region spans residues 72–247; that stretch reads VLMEDTMTEV…RLEEVREQME (176 aa). Met-135 is modified (methionine sulfoxide). A Phosphoserine modification is found at Ser-139. The LDL and other lipoprotein receptors binding stretch occupies residues 150–160; the sequence is HLRKMRKRLMR. Residues 150–160 are LDL receptor binding; sequence HLRKMRKRLMR. Residue 154 to 157 coordinates heparin; that stretch reads MRKR. Residues 202-282 form a lipid-binding and lipoprotein association region; it reads TANLGAGAAQ…GWFEPLVEDM (81 aa). 221–228 contacts heparin; that stretch reads SDRIRGRL. The segment at 258–312 is homooligomerization; the sequence is QQIRLQAEIFQARIKGWFEPLVEDMQRQWANLMEKIQASVATNSIASTTVPLENQ. A specificity for association with VLDL region spans residues 270-282; that stretch reads RIKGWFEPLVEDM.

It belongs to the apolipoprotein A1/A4/E family. As to quaternary structure, homotetramer. May interact with ABCA1; functionally associated with ABCA1 in the biogenesis of HDLs. May interact with APP/A4 amyloid-beta peptide; the interaction is extremely stable in vitro but its physiological significance is unclear. May interact with MAPT. May interact with MAP2. In the cerebrospinal fluid, interacts with secreted SORL1. Interacts with PMEL; this allows the loading of PMEL luminal fragment on ILVs to induce fibril nucleation. Post-translationally, APOE exists as multiple glycosylated and sialylated glycoforms within cells and in plasma. The extent of glycosylation and sialylation are tissue and context specific. In terms of processing, glycated in plasma VLDL. Phosphorylated by FAM20C in the extracellular medium.

Its subcellular location is the secreted. It is found in the extracellular space. The protein localises to the extracellular matrix. It localises to the extracellular vesicle. The protein resides in the endosome. Its subcellular location is the multivesicular body. Functionally, APOE is an apolipoprotein, a protein associating with lipid particles, that mainly functions in lipoprotein-mediated lipid transport between organs via the plasma and interstitial fluids. APOE is a core component of plasma lipoproteins and is involved in their production, conversion and clearance. Apolipoproteins are amphipathic molecules that interact both with lipids of the lipoprotein particle core and the aqueous environment of the plasma. As such, APOE associates with chylomicrons, chylomicron remnants, very low density lipoproteins (VLDL) and intermediate density lipoproteins (IDL) but shows a preferential binding to high-density lipoproteins (HDL). It also binds a wide range of cellular receptors including the LDL receptor/LDLR and the very low-density lipoprotein receptor/VLDLR that mediate the cellular uptake of the APOE-containing lipoprotein particles. Finally, APOE also has a heparin-binding activity and binds heparan-sulfate proteoglycans on the surface of cells, a property that supports the capture and the receptor-mediated uptake of APOE-containing lipoproteins by cells. The polypeptide is Apolipoprotein E (Apoe) (Rattus norvegicus (Rat)).